We begin with the raw amino-acid sequence, 162 residues long: Beta-lactoglobulin-1 (162 aa).

Intrachain disulfides connect C66–C160 and C106–C119.

This sequence belongs to the calycin superfamily. Lipocalin family. In terms of assembly, monomer. Synthesized in mammary gland and secreted in milk.

The protein localises to the secreted. Functionally, primary component of whey, it binds retinol and is probably involved in the transport of that molecule. This Equus asinus (Donkey) protein is Beta-lactoglobulin-1 (LGB1).